The primary structure comprises 248 residues: Small ribosomal subunit protein uS2c (248 aa).

Belongs to the universal ribosomal protein uS2 family.

Its subcellular location is the plastid. The protein localises to the chloroplast. The polypeptide is Small ribosomal subunit protein uS2c (rps2) (Trachelium caeruleum (Blue throatwort)).